We begin with the raw amino-acid sequence, 181 residues long: Acireductone dioxygenase (181 aa).

Fe(2+)-binding residues include H97, H99, E103, and H141. Residues H97, H99, E103, and H141 each contribute to the Ni(2+) site.

The protein belongs to the acireductone dioxygenase (ARD) family. Monomer. The cofactor is Fe(2+). Requires Ni(2+) as cofactor.

It carries out the reaction 1,2-dihydroxy-5-(methylsulfanyl)pent-1-en-3-one + O2 = 3-(methylsulfanyl)propanoate + CO + formate + 2 H(+). The catalysed reaction is 1,2-dihydroxy-5-(methylsulfanyl)pent-1-en-3-one + O2 = 4-methylsulfanyl-2-oxobutanoate + formate + 2 H(+). The protein operates within amino-acid biosynthesis; L-methionine biosynthesis via salvage pathway; L-methionine from S-methyl-5-thio-alpha-D-ribose 1-phosphate: step 5/6. Functionally, catalyzes 2 different reactions between oxygen and the acireductone 1,2-dihydroxy-3-keto-5-methylthiopentene (DHK-MTPene) depending upon the metal bound in the active site. Fe-containing acireductone dioxygenase (Fe-ARD) produces formate and 2-keto-4-methylthiobutyrate (KMTB), the alpha-ketoacid precursor of methionine in the methionine recycle pathway. Ni-containing acireductone dioxygenase (Ni-ARD) produces methylthiopropionate, carbon monoxide and formate, and does not lie on the methionine recycle pathway. The protein is Acireductone dioxygenase of Pseudomonas syringae pv. syringae (strain B728a).